The chain runs to 739 residues: Phosphoribosylformylglycinamidine synthase subunit PurL (739 aa).

Residue His-53 is part of the active site. ATP contacts are provided by Tyr-56 and Lys-95. Glu-97 provides a ligand contact to Mg(2+). Residues 98-101 (SHNH) and Arg-120 each bind substrate. The Proton acceptor role is filled by His-99. A Mg(2+)-binding site is contributed by Asp-121. A substrate-binding site is contributed by Gln-244. Asp-274 contributes to the Mg(2+) binding site. Position 318 to 320 (318 to 320 (ESQ)) interacts with substrate. Residues Asp-501 and Gly-538 each contribute to the ATP site. Asn-539 contributes to the Mg(2+) binding site. Residue Ser-541 coordinates substrate.

This sequence belongs to the FGAMS family. As to quaternary structure, monomer. Part of the FGAM synthase complex composed of 1 PurL, 1 PurQ and 2 PurS subunits.

The protein localises to the cytoplasm. The catalysed reaction is N(2)-formyl-N(1)-(5-phospho-beta-D-ribosyl)glycinamide + L-glutamine + ATP + H2O = 2-formamido-N(1)-(5-O-phospho-beta-D-ribosyl)acetamidine + L-glutamate + ADP + phosphate + H(+). Its pathway is purine metabolism; IMP biosynthesis via de novo pathway; 5-amino-1-(5-phospho-D-ribosyl)imidazole from N(2)-formyl-N(1)-(5-phospho-D-ribosyl)glycinamide: step 1/2. Functionally, part of the phosphoribosylformylglycinamidine synthase complex involved in the purines biosynthetic pathway. Catalyzes the ATP-dependent conversion of formylglycinamide ribonucleotide (FGAR) and glutamine to yield formylglycinamidine ribonucleotide (FGAM) and glutamate. The FGAM synthase complex is composed of three subunits. PurQ produces an ammonia molecule by converting glutamine to glutamate. PurL transfers the ammonia molecule to FGAR to form FGAM in an ATP-dependent manner. PurS interacts with PurQ and PurL and is thought to assist in the transfer of the ammonia molecule from PurQ to PurL. The sequence is that of Phosphoribosylformylglycinamidine synthase subunit PurL from Listeria monocytogenes serovar 1/2a (strain ATCC BAA-679 / EGD-e).